The primary structure comprises 1343 residues: DNA-directed RNA polymerase subunit beta (1343 aa).

This sequence belongs to the RNA polymerase beta chain family. As to quaternary structure, the RNAP catalytic core consists of 2 alpha, 1 beta, 1 beta' and 1 omega subunit. When a sigma factor is associated with the core the holoenzyme is formed, which can initiate transcription.

It carries out the reaction RNA(n) + a ribonucleoside 5'-triphosphate = RNA(n+1) + diphosphate. In terms of biological role, DNA-dependent RNA polymerase catalyzes the transcription of DNA into RNA using the four ribonucleoside triphosphates as substrates. The chain is DNA-directed RNA polymerase subunit beta from Shewanella pealeana (strain ATCC 700345 / ANG-SQ1).